Reading from the N-terminus, the 364-residue chain is Peptide chain release factor 1 (364 aa).

Q238 is subject to N5-methylglutamine. Over residues 286-297 (DEKRQAEEDSTR) the composition is skewed to basic and acidic residues. The disordered stretch occupies residues 286-315 (DEKRQAEEDSTRRNLVGSGDRSERIRTYNY).

It belongs to the prokaryotic/mitochondrial release factor family. In terms of processing, methylated by PrmC. Methylation increases the termination efficiency of RF1.

It is found in the cytoplasm. Its function is as follows. Peptide chain release factor 1 directs the termination of translation in response to the peptide chain termination codons UAG and UAA. This is Peptide chain release factor 1 from Idiomarina loihiensis (strain ATCC BAA-735 / DSM 15497 / L2-TR).